The sequence spans 87 residues: Large ribosomal subunit protein bL28 (87 aa).

It belongs to the bacterial ribosomal protein bL28 family.

This is Large ribosomal subunit protein bL28 from Akkermansia muciniphila (strain ATCC BAA-835 / DSM 22959 / JCM 33894 / BCRC 81048 / CCUG 64013 / CIP 107961 / Muc).